A 581-amino-acid polypeptide reads, in one-letter code: Frizzled-10 (581 aa).

An N-terminal signal peptide occupies residues 1–20 (MQRPGPRLWLVLQVMGSCAA). The Extracellular portion of the chain corresponds to 21 to 225 (ISSMDMERPG…DVYWSREDKR (205 aa)). The 122-residue stretch at 29 to 150 (PGDGKCQPIE…NDPNYLCMEA (122 aa)) folds into the FZ domain. 5 disulfide bridges follow: C34/C95, C42/C88, C79/C117, C106/C147, and C110/C134. The N-linked (GlcNAc...) asparagine glycan is linked to N48. A glycan (N-linked (GlcNAc...) asparagine) is linked at N153. A helical membrane pass occupies residues 226–246 (FAVVWLAIWAVLCFFSSAFTV). At 247 to 262 (LTFLIDPARFRYPERP) the chain is on the cytoplasmic side. A helical transmembrane segment spans residues 263 to 283 (IIFLSMCYCVYSVGYLIRLFA). Residues 284–311 (GAESIACDRDSGQLYVIQEGLESTGCTL) are Extracellular-facing. Residues 312–332 (VFLVLYYFGMASSLWWVVLTL) traverse the membrane as a helical segment. Residues 333-351 (TWFLAAGKKWGHEAIEANS) are Cytoplasmic-facing. A helical transmembrane segment spans residues 352-372 (SYFHLAAWAIPAVKTILILVM). Over 373-393 (RRVAGDELTGVCYVGSMDVNA) the chain is Extracellular. Residues 394 to 414 (LTGFVLIPLACYLVIGTSFIL) form a helical membrane-spanning segment. The Cytoplasmic portion of the chain corresponds to 415-443 (SGFVALFHIRRVMKTGGENTDKLEKLMVR). Residues 444-464 (IGLFSVLYTVPATCVIACYFY) form a helical membrane-spanning segment. The Extracellular portion of the chain corresponds to 465-502 (ERLNMDYWKILAAQHKCKMNNQTKTLDCLMAASIPAVE). N485 is a glycosylation site (N-linked (GlcNAc...) asparagine). Residues 503–523 (IFMVKIFMLLVVGITSGMWIW) traverse the membrane as a helical segment. Topologically, residues 524-581 (TSKTLQSWQQVCSRRLKKKSRRKPASVITSGGIYKKAQHPQKTHHGKYEIPAQSPTCV) are cytoplasmic. The Lys-Thr-X-X-X-Trp motif, mediates interaction with the PDZ domain of Dvl family members motif lies at 526-531 (KTLQSW). Positions 560–581 (AQHPQKTHHGKYEIPAQSPTCV) are disordered. A PDZ-binding motif is present at residues 579–581 (TCV).

It belongs to the G-protein coupled receptor Fz/Smo family. Interacts with WNT7B. Interacts with MYOC. In terms of processing, ubiquitinated by ZNRF3, leading to its degradation by the proteasome. In terms of tissue distribution, highest levels in the placenta and fetal kidney, followed by fetal lung and brain. In adult brain, abundantly expressed in the cerebellum, followed by cerebral cortex, medulla and spinal cord; very low levels in total brain, frontal lobe, temporal lobe and putamen. Weak expression detected in adult brain, heart, lung, skeletal muscle, pancreas, spleen and prostate.

Its subcellular location is the cell membrane. Its function is as follows. Receptor for Wnt proteins. Functions in the canonical Wnt/beta-catenin signaling pathway. The canonical Wnt/beta-catenin signaling pathway leads to the activation of disheveled proteins, inhibition of GSK-3 kinase, nuclear accumulation of beta-catenin and activation of Wnt target genes. A second signaling pathway involving PKC and calcium fluxes has been seen for some family members, but it is not yet clear if it represents a distinct pathway or if it can be integrated in the canonical pathway, as PKC seems to be required for Wnt-mediated inactivation of GSK-3 kinase. Both pathways seem to involve interactions with G-proteins. May be involved in transduction and intercellular transmission of polarity information during tissue morphogenesis and/or in differentiated tissues. This is Frizzled-10 (FZD10) from Homo sapiens (Human).